The sequence spans 733 residues: FYVE, RhoGEF and PH domain-containing protein 3 (733 aa).

3 stretches are compositionally biased toward polar residues: residues 1–11 (MELGRSSSTPQ), 47–60 (HSSSAPAGDSSTRE), and 106–117 (ETASDSRVPQDN). A disordered region spans residues 1 to 134 (MELGRSSSTP…GVGEEPDPKV (134 aa)). Positions 118 to 129 (PQEEEDSGVGEE) are enriched in acidic residues. S124 carries the phosphoserine modification. One can recognise a DH domain in the interval 153 to 337 (KLLHIAQELL…STAADHSNAA (185 aa)). The PH 1 domain maps to 366–465 (ELIKEGSIQK…WIQVIQATVE (100 aa)). Residues 481 to 535 (CSQDEEPTLSPDQPVMSTSSVEPAGVADSNGGTPGIESRKSSSKTRRDKEKPGCK) are disordered. Positions 517-533 (ESRKSSSKTRRDKEKPG) are enriched in basic and acidic residues. The segment at 528-584 (DKEKPGCKSCGETFNSITKRRYRCKLCGEVICRKCSEFKAENSKQSRVCRECFLEEP) adopts an FYVE-type zinc-finger fold. C534, C537, C551, C554, C559, C562, C576, and C579 together coordinate Zn(2+). Disordered stretches follow at residues 586–612 (VPPSPSSETPTELKQNAEKPPSVDPRP) and 712–733 (GDTAGDRPGASQPQAPAGTDTP). One can recognise a PH 2 domain in the interval 612–711 (PSLLCGTLNL…WLKALGTAVH (100 aa)). T732 bears the Phosphothreonine mark.

In terms of tissue distribution, detected in adult brain, spleen, lung and skeletal muscle. Detected in embryos from 7 dpc to 17 dpc.

The protein resides in the cytoplasm. The protein localises to the cytoskeleton. Its function is as follows. Promotes the formation of filopodia. May activate CDC42, a member of the Ras-like family of Rho- and Rac proteins, by exchanging bound GDP for free GTP. Plays a role in regulating the actin cytoskeleton and cell shape. The sequence is that of FYVE, RhoGEF and PH domain-containing protein 3 (Fgd3) from Mus musculus (Mouse).